The following is a 198-amino-acid chain: Myc target protein 1 homolog (198 aa).

The short motif at 52–72 (RRRASASISPRMPKSSSRRPR) is the Bipartite nuclear localization signal element. Disordered regions lie at residues 58–83 (SISP…LNRS) and 172–198 (NNSL…FPDS). The segment covering 172–181 (NNSLRLGPST) has biased composition (polar residues).

It belongs to the MYCT1 family.

The protein localises to the nucleus. Its function is as follows. May regulate certain MYC target genes, MYC seems to be a direct upstream transcriptional activator. This chain is Myc target protein 1 homolog (myct1), found in Xenopus tropicalis (Western clawed frog).